Consider the following 328-residue polypeptide: Type II secretion system protein K (328 aa).

Positions Met1–Gly7 are cleaved as a propeptide — leader sequence. The helical transmembrane segment at Ala8–Thr28 threads the bilayer. Residues Glu29 to Pro328 are Periplasmic-facing.

This sequence belongs to the GSP K family. Type II secretion is composed of four main components: the outer membrane complex, the inner membrane complex, the cytoplasmic secretion ATPase and the periplasm-spanning pseudopilus. Interacts with core component OutG. Cleaved by prepilin peptidase.

The protein resides in the cell inner membrane. Component of the type II secretion system required for the energy-dependent secretion of extracellular factors such as proteases and toxins from the periplasm. Plays a role in pseudopilus assembly and seems to control its length. Interacts with the pseudopilus tip complex that is critical for the recognition and binding of secretion substrates. This chain is Type II secretion system protein K (outK), found in Pectobacterium carotovorum subsp. carotovorum (Erwinia carotovora subsp. carotovora).